Here is an 859-residue protein sequence, read N- to C-terminus: DNA mismatch repair protein MutS (859 aa).

Residue 614 to 621 (GPNMGGKS) coordinates ATP.

The protein belongs to the DNA mismatch repair MutS family.

Functionally, this protein is involved in the repair of mismatches in DNA. It is possible that it carries out the mismatch recognition step. This protein has a weak ATPase activity. In Histophilus somni (strain 2336) (Haemophilus somnus), this protein is DNA mismatch repair protein MutS.